The following is a 283-amino-acid chain: Polyamine aminopropyltransferase (283 aa).

Residues 5-238 form the PABS domain; the sequence is PTWIDEYHKG…GIWSWTFASD (234 aa). Position 32 (Gln32) interacts with S-methyl-5'-thioadenosine. Spermidine-binding residues include His63 and Asp87. S-methyl-5'-thioadenosine is bound by residues Glu107 and 139 to 140; that span reads DG. Asp158 acts as the Proton acceptor in catalysis. Position 158 to 161 (158 to 161) interacts with spermidine; sequence DCSD.

Belongs to the spermidine/spermine synthase family. Homodimer or homotetramer.

It is found in the cytoplasm. It carries out the reaction S-adenosyl 3-(methylsulfanyl)propylamine + putrescine = S-methyl-5'-thioadenosine + spermidine + H(+). It functions in the pathway amine and polyamine biosynthesis; spermidine biosynthesis; spermidine from putrescine: step 1/1. Catalyzes the irreversible transfer of a propylamine group from the amino donor S-adenosylmethioninamine (decarboxy-AdoMet) to putrescine (1,4-diaminobutane) to yield spermidine. The chain is Polyamine aminopropyltransferase from Prochlorococcus marinus subsp. pastoris (strain CCMP1986 / NIES-2087 / MED4).